The chain runs to 1346 residues: G-protein coupled receptor-associated sorting protein 1 (1346 aa).

Disordered stretches follow at residues 1–101, 144–177, and 192–258; these read MTGA…FRGE, TESI…RPRP, and ADKS…SAKT. Residues 21 to 36 are compositionally biased toward low complexity; sequence ENANAAEVEPEVPLVV. Basic residues predominate over residues 211–226; that stretch reads FRPRKSMKSNTRFRHM. S295 is modified (phosphoserine). Disordered stretches follow at residues 311–399 and 461–485; these read EEAK…RPEE and VSSF…SKSM. Over residues 316–333 the composition is skewed to basic residues; it reads RSKPRARKGVNMRARHQA. Composition is skewed to basic and acidic residues over residues 347–361 and 370–399; these read DKNK…EEKA and KKEP…RPEE. A compositionally biased stretch (polar residues) spans 461 to 484; sequence VSSFCLGSGKKTSMESGPKATSKS. 2 positions are modified to phosphoserine: S619 and S626. Position 860 is a phosphothreonine (T860). S862 is subject to Phosphoserine. A disordered region spans residues 984-1004; it reads ACEPESSTEHEPDPSRRPQSW. Basic and acidic residues predominate over residues 990-1003; it reads STEHEPDPSRRPQS.

Belongs to the GPRASP family. Interacts with cytoplasmic tails of a variety of G-protein coupled receptors such as delta opioid receptor/OPRD1, beta-2 adrenergic receptor/ADRB2 and D4 dopamine receptor/DRD4. Interacts with BECN2; the interaction is direct and with D2 dopamine receptor/DRD2. Interacts with PER1. As to expression, expressed in the brain.

The protein localises to the cytoplasm. Modulates lysosomal sorting and functional down-regulation of a variety of G-protein coupled receptors. Targets receptors for degradation in lysosomes via its interaction with BECN2. The polypeptide is G-protein coupled receptor-associated sorting protein 1 (Gprasp1) (Rattus norvegicus (Rat)).